A 475-amino-acid chain; its full sequence is 3-isopropylmalate dehydratase large subunit (475 aa).

[4Fe-4S] cluster-binding residues include Cys349, Cys409, and Cys412.

The protein belongs to the aconitase/IPM isomerase family. LeuC type 1 subfamily. In terms of assembly, heterodimer of LeuC and LeuD. It depends on [4Fe-4S] cluster as a cofactor.

It catalyses the reaction (2R,3S)-3-isopropylmalate = (2S)-2-isopropylmalate. It participates in amino-acid biosynthesis; L-leucine biosynthesis; L-leucine from 3-methyl-2-oxobutanoate: step 2/4. Functionally, catalyzes the isomerization between 2-isopropylmalate and 3-isopropylmalate, via the formation of 2-isopropylmaleate. This chain is 3-isopropylmalate dehydratase large subunit, found in Cereibacter sphaeroides (strain KD131 / KCTC 12085) (Rhodobacter sphaeroides).